The following is a 72-amino-acid chain: uncharacterized protein (72 aa).

Residues 23-45 form a helical membrane-spanning segment; sequence ITNLLITTILLCFFNATTYWKLF.

The protein resides in the membrane. This is an uncharacterized protein from Schizosaccharomyces pombe (strain 972 / ATCC 24843) (Fission yeast).